We begin with the raw amino-acid sequence, 73 residues long: DNA gyrase inhibitor YacG (73 aa).

Residues Cys-14, Cys-17, Cys-30, and Cys-34 each coordinate Zn(2+). The segment at 54–73 (AEQADDTAGPGAAEDDTDSH) is disordered.

Belongs to the DNA gyrase inhibitor YacG family. As to quaternary structure, interacts with GyrB. Zn(2+) is required as a cofactor.

Its function is as follows. Inhibits all the catalytic activities of DNA gyrase by preventing its interaction with DNA. Acts by binding directly to the C-terminal domain of GyrB, which probably disrupts DNA binding by the gyrase. This is DNA gyrase inhibitor YacG from Hyphomonas neptunium (strain ATCC 15444).